Reading from the N-terminus, the 553-residue chain is Glucagon-like peptide 2 receptor (553 aa).

The Extracellular portion of the chain corresponds to 1–173 (MKLGSSRAGP…SFKQNVDRYA (173 aa)). Cystine bridges form between Cys-83–Cys-105, Cys-96–Cys-137, and Cys-118–Cys-159. N-linked (GlcNAc...) asparagine glycans are attached at residues Asn-97, Asn-113, Asn-148, and Asn-162. Residues 174–198 (LLSTLQLMYTVGYSFSLISLFLALT) traverse the membrane as a helical segment. Over 199–210 (LLLFLRKLHCTR) the chain is Cytoplasmic. Residues 211–235 (NYIHMNLFASFILRTLAVLVKDVVF) form a helical membrane-spanning segment. The Extracellular segment spans residues 236 to 261 (YNSYSKRPDNENGWMSYLSEMSTSCR). Residues 262–285 (SVQVLLHYFVGANYLWLLVEGLYL) form a helical membrane-spanning segment. The Cytoplasmic portion of the chain corresponds to 286–299 (HTLLEPTVLPERRL). A helical membrane pass occupies residues 300-321 (WPRYLLLGWAFPVLFVVPWGFA). Over 322-339 (RAHLENTGCWTTNGNKKI) the chain is Extracellular. The chain crosses the membrane as a helical span at residues 340–362 (WWIIRGPMMLCVTVNFFIFLKIL). The Cytoplasmic portion of the chain corresponds to 363 to 386 (KLLISKLKAHQMCFRDYKYRLAKS). A helical membrane pass occupies residues 387–405 (TLVLIPLLGVHEILFSFIT). Residues 406-417 (DDQVEGFAKLIR) are Extracellular-facing. A helical membrane pass occupies residues 418–438 (LFIQLTLSSFHGFLVALQYGF). Over 439 to 550 (ANGEVKAELR…ANTMEEILEE (112 aa)) the chain is Cytoplasmic.

This sequence belongs to the G-protein coupled receptor 2 family.

Its subcellular location is the cell membrane. Functionally, this is a receptor for glucagon-like peptide 2. The activity of this receptor is mediated by G proteins which activate adenylyl cyclase. The polypeptide is Glucagon-like peptide 2 receptor (GLP2R) (Homo sapiens (Human)).